Reading from the N-terminus, the 545-residue chain is CTP synthase (545 aa).

The tract at residues 2–266 (TTNYIFVTGG…DDYICKRFSL (265 aa)) is amidoligase domain. Position 14 (serine 14) interacts with CTP. A UTP-binding site is contributed by serine 14. ATP-binding positions include 15–20 (SLGKGI) and aspartate 72. Aspartate 72 and glutamate 140 together coordinate Mg(2+). Residues 147–149 (DIE), 187–192 (KTKPTQ), and lysine 223 contribute to the CTP site. Residues 187-192 (KTKPTQ) and lysine 223 contribute to the UTP site. Position 239 to 241 (239 to 241 (KDV)) interacts with ATP. Residues 291 to 542 (TIGMVGKYIE…VKAANEHQKR (252 aa)) enclose the Glutamine amidotransferase type-1 domain. Glycine 352 lines the L-glutamine pocket. Cysteine 379 functions as the Nucleophile; for glutamine hydrolysis in the catalytic mechanism. L-glutamine contacts are provided by residues 380–383 (LGMQ), glutamate 403, and arginine 470. Active-site residues include histidine 515 and glutamate 517.

This sequence belongs to the CTP synthase family. As to quaternary structure, homotetramer.

The catalysed reaction is UTP + L-glutamine + ATP + H2O = CTP + L-glutamate + ADP + phosphate + 2 H(+). The enzyme catalyses L-glutamine + H2O = L-glutamate + NH4(+). It catalyses the reaction UTP + NH4(+) + ATP = CTP + ADP + phosphate + 2 H(+). Its pathway is pyrimidine metabolism; CTP biosynthesis via de novo pathway; CTP from UDP: step 2/2. Its activity is regulated as follows. Allosterically activated by GTP, when glutamine is the substrate; GTP has no effect on the reaction when ammonia is the substrate. The allosteric effector GTP functions by stabilizing the protein conformation that binds the tetrahedral intermediate(s) formed during glutamine hydrolysis. Inhibited by the product CTP, via allosteric rather than competitive inhibition. Functionally, catalyzes the ATP-dependent amination of UTP to CTP with either L-glutamine or ammonia as the source of nitrogen. Regulates intracellular CTP levels through interactions with the four ribonucleotide triphosphates. This chain is CTP synthase, found in Salmonella typhi.